Reading from the N-terminus, the 491-residue chain is Peptidoglycan D,D-transpeptidase PbpA (491 aa).

At 1–8 (MNTSLRRV) the chain is on the cytoplasmic side. A helical; Signal-anchor for type II membrane protein transmembrane segment spans residues 9–29 (AVAIMVLIVLLLANATVTQVF). Topologically, residues 30-491 (AADGLRADPR…TIAAALREGS (462 aa)) are periplasmic. The segment at 160–484 (GSVVALEPST…AAPIGRATIA (325 aa)) is transpeptidase. Ser-222 serves as the catalytic Acyl-ester intermediate.

The protein belongs to the transpeptidase family.

The protein resides in the cell inner membrane. It catalyses the reaction Preferential cleavage: (Ac)2-L-Lys-D-Ala-|-D-Ala. Also transpeptidation of peptidyl-alanyl moieties that are N-acyl substituents of D-alanine.. It functions in the pathway cell wall biogenesis; peptidoglycan biosynthesis. In terms of biological role, transpeptidase that catalyzes cross-linking of the peptidoglycan cell wall. Required for the regulation of cell length. The protein is Peptidoglycan D,D-transpeptidase PbpA (pbpA) of Mycolicibacterium smegmatis (strain ATCC 700084 / mc(2)155) (Mycobacterium smegmatis).